We begin with the raw amino-acid sequence, 208 residues long: Glutathione S-transferase 2 (208 aa).

Residues 1–78 form the GST N-terminal domain; sequence MSYKLTYFSI…HLARKYNLNG (78 aa). Glutathione contacts are provided by residues tyrosine 7, lysine 42, 49–50, and 62–63; these read QL and QS. The GST C-terminal domain maps to 80-200; the sequence is NEMETTYIDM…YCEKRDAAKV (121 aa).

Belongs to the GST superfamily. Pi family. Homodimer. As to expression, hypodermis, wall of the seminal receptacle and spermatozoa of adult worms.

It catalyses the reaction RX + glutathione = an S-substituted glutathione + a halide anion + H(+). In terms of biological role, appears to play a central role in the parasite detoxification system. The sequence is that of Glutathione S-transferase 2 (GST2) from Onchocerca volvulus.